A 426-amino-acid polypeptide reads, in one-letter code: Gamma-glutamyl phosphate reductase (426 aa).

This sequence belongs to the gamma-glutamyl phosphate reductase family.

The protein resides in the cytoplasm. The enzyme catalyses L-glutamate 5-semialdehyde + phosphate + NADP(+) = L-glutamyl 5-phosphate + NADPH + H(+). It participates in amino-acid biosynthesis; L-proline biosynthesis; L-glutamate 5-semialdehyde from L-glutamate: step 2/2. In terms of biological role, catalyzes the NADPH-dependent reduction of L-glutamate 5-phosphate into L-glutamate 5-semialdehyde and phosphate. The product spontaneously undergoes cyclization to form 1-pyrroline-5-carboxylate. The polypeptide is Gamma-glutamyl phosphate reductase (Cupriavidus metallidurans (strain ATCC 43123 / DSM 2839 / NBRC 102507 / CH34) (Ralstonia metallidurans)).